A 640-amino-acid chain; its full sequence is Spindle assembly abnormal protein 6 homolog (640 aa).

The region spanning 40-92 (VHKKDLAVRLTDDADPFFLYNLVISEEDFQSLKSQQGLLVDFSAFPQKFIDLL) is the PISA domain. Residues 154–475 (LARCLKCLKE…KQLLKTNENV (322 aa)) adopt a coiled-coil conformation.

As to quaternary structure, nine homodimers form a cartwheel structure with an internal diameter of 23 nM and radial spokes connecting to the microtubule triplets.

The protein localises to the cytoplasm. It is found in the cytoskeleton. Its subcellular location is the microtubule organizing center. It localises to the centrosome. In terms of biological role, central scaffolding component of the centrioles ensuring their 9-fold symmetry. Required for centrosome biogenesis and duplication: required both for mother-centriole-dependent centriole duplication and deuterosome-dependent centriole amplification in multiciliated cells. The protein is Spindle assembly abnormal protein 6 homolog (SASS6) of Gallus gallus (Chicken).